The chain runs to 241 residues: Ribosomal RNA small subunit methyltransferase G (241 aa).

S-adenosyl-L-methionine contacts are provided by residues G96, F101, 119 to 121, 147 to 148, and R166; these read EAS and VE.

This sequence belongs to the methyltransferase superfamily. RNA methyltransferase RsmG family.

The protein resides in the cytoplasm. It catalyses the reaction guanosine(527) in 16S rRNA + S-adenosyl-L-methionine = N(7)-methylguanosine(527) in 16S rRNA + S-adenosyl-L-homocysteine. Its function is as follows. Specifically methylates the N7 position of guanine in position 527 of 16S rRNA. This Syntrophus aciditrophicus (strain SB) protein is Ribosomal RNA small subunit methyltransferase G.